The chain runs to 804 residues: Chondroitin sulfate synthase mig-22 (804 aa).

Residues 1–6 (MVGGGR) lie on the Cytoplasmic side of the membrane. The helical; Signal-anchor for type II membrane protein transmembrane segment at 7-27 (TGIHLLLGFLIGAALALFFFS) threads the bilayer. Topologically, residues 28–804 (STPSIDLTSS…QLAKLLFHEK (777 aa)) are lumenal. N-linked (GlcNAc...) asparagine glycosylation is found at Asn123, Asn172, and Asn268.

Belongs to the chondroitin N-acetylgalactosaminyltransferase family. In terms of assembly, interacts with sqv-5. The cofactor is a divalent metal cation. In terms of tissue distribution, expressed in seam cells, the vulval epithelium and in oocytes (at protein level).

The protein resides in the golgi apparatus. The protein localises to the golgi stack membrane. It carries out the reaction 3-O-(beta-D-GlcA-(1-&gt;3)-beta-D-GalNAc-(1-&gt;4)-beta-D-GlcA-(1-&gt;3)-beta-D-Gal-(1-&gt;3)-beta-D-Gal-(1-&gt;4)-beta-D-Xyl)-L-seryl-[protein] + UDP-N-acetyl-alpha-D-galactosamine = 3-O-(beta-D-GalNAc-(1-&gt;4)-beta-D-GlcA-(1-&gt;3)-beta-D-GalNAc-(1-&gt;4)-beta-D-GlcA-(1-&gt;3)-beta-D-Gal-(1-&gt;3)-beta-D-Gal-(1-&gt;4)-beta-D-Xyl)-L-seryl-[protein] + UDP + H(+). The catalysed reaction is 3-O-{beta-D-GlcA-(1-&gt;3)-[beta-D-GalNAc-(1-&gt;4)-beta-D-GlcA-(1-&gt;3)](n)-beta-D-GalNAc-(1-&gt;4)-beta-D-GlcA-(1-&gt;3)-beta-D-Gal-(1-&gt;3)-beta-D-Gal-(1-&gt;4)-beta-D-Xyl}-L-seryl-[protein] + UDP-N-acetyl-alpha-D-galactosamine = 3-O-{[beta-D-GalNAc-(1-&gt;4)-beta-D-GlcA-(1-&gt;3)](n+1)-beta-D-GalNAc-(1-&gt;4)-beta-D-GlcA-(1-&gt;3)-beta-D-Gal-(1-&gt;3)-beta-D-Gal-(1-&gt;4)-beta-D-Xyl}-L-seryl-[protein] + UDP + H(+). It catalyses the reaction 3-O-(beta-D-GalNAc-(1-&gt;4)-beta-D-GlcA-(1-&gt;3)-beta-D-Gal-(1-&gt;3)-beta-D-Gal-(1-&gt;4)-beta-D-Xyl)-L-seryl-[protein] + UDP-alpha-D-glucuronate = 3-O-(beta-D-GlcA-(1-&gt;3)-beta-D-GalNAc-(1-&gt;4)-beta-D-GlcA-(1-&gt;3)-beta-D-Gal-(1-&gt;3)-beta-D-Gal-(1-&gt;4)-beta-D-Xyl)-L-seryl-[protein] + UDP + H(+). The enzyme catalyses 3-O-{[beta-D-GalNAc-(1-&gt;4)-beta-D-GlcA-(1-&gt;3)](n)-beta-D-GalNAc-(1-&gt;4)-beta-D-GlcA-(1-&gt;3)-beta-D-Gal-(1-&gt;3)-beta-D-Gal-(1-&gt;4)-beta-D-Xyl}-L-seryl-[protein] + UDP-alpha-D-glucuronate = 3-O-{beta-D-GlcA-(1-&gt;3)-[beta-D-GalNAc-(1-&gt;4)-beta-D-GlcA-(1-&gt;3)](n)-beta-D-GalNAc-(1-&gt;4)-beta-D-GlcA-(1-&gt;3)-beta-D-Gal-(1-&gt;3)-beta-D-Gal-(1-&gt;4)-beta-D-Xyl}-L-seryl-[protein] + UDP + H(+). Functionally, has both beta-1,3-glucuronic acid and beta-1,4-N-acetylgalactosamine transferase activity. Transfers glucuronic acid (GlcUA) from UDP-GlcUA and N-acetylgalactosamine (GalNAc) from UDP-GalNAc to the non-reducing end of the elongating chondroitin polymer. Required together with sqv-5 for the biosynthesis of chondroitin. Chondroitin is involved in organogenesis of the vulva, maturation of the gonad, and neural development. May have a specific role in unc-6/netrin-mediated dorsal guidance of gonadal distal tip cells. Glycosyltransferase activity is weak. The polypeptide is Chondroitin sulfate synthase mig-22 (mig-22) (Caenorhabditis elegans).